Here is a 131-residue protein sequence, read N- to C-terminus: Small ribosomal subunit protein uS8 (131 aa).

Belongs to the universal ribosomal protein uS8 family. Part of the 30S ribosomal subunit. Contacts proteins S5 and S12.

One of the primary rRNA binding proteins, it binds directly to 16S rRNA central domain where it helps coordinate assembly of the platform of the 30S subunit. This Nitrosomonas europaea (strain ATCC 19718 / CIP 103999 / KCTC 2705 / NBRC 14298) protein is Small ribosomal subunit protein uS8.